A 551-amino-acid chain; its full sequence is Glucans biosynthesis protein D (551 aa).

A signal peptide (tat-type signal) is located at residues 1–32; that stretch reads MDRRRFIKGSMAMAAVCGTSGIASLFSQAAFA.

Belongs to the OpgD/OpgG family. In terms of processing, predicted to be exported by the Tat system. The position of the signal peptide cleavage has not been experimentally proven.

It is found in the periplasm. The protein operates within glycan metabolism; osmoregulated periplasmic glucan (OPG) biosynthesis. Probably involved in the control of the structural glucose backbone of osmoregulated periplasmic glucans (OPGs). In Escherichia coli O9:H4 (strain HS), this protein is Glucans biosynthesis protein D.